The following is a 184-amino-acid chain: GTP cyclohydrolase 1 (184 aa).

Positions 75, 78, and 146 each coordinate Zn(2+).

The protein belongs to the GTP cyclohydrolase I family. Homomer.

The catalysed reaction is GTP + H2O = 7,8-dihydroneopterin 3'-triphosphate + formate + H(+). The protein operates within cofactor biosynthesis; 7,8-dihydroneopterin triphosphate biosynthesis; 7,8-dihydroneopterin triphosphate from GTP: step 1/1. This chain is GTP cyclohydrolase 1, found in Streptococcus pneumoniae (strain Taiwan19F-14).